Consider the following 141-residue polypeptide: Oleosin L (141 aa).

3 helical membrane-spanning segments follow: residues 23-43, 46-66, and 74-94; these read VLFFVVMGGGVLASLSALALA, VVLMLILTPVFLLLSPVILPV, and AAAFMAAVTIGIAGAAALIWV. The Proline-knot motif lies at 54–65; the sequence is PVFLLLSPVILP.

This sequence belongs to the oleosin family. In terms of tissue distribution, expressed in megagametophytes (at protein level).

The protein localises to the lipid droplet. Its subcellular location is the membrane. The polypeptide is Oleosin L (Pinus massoniana (Chinese red pine)).